Consider the following 873-residue polypeptide: Kinase suppressor of Ras 1 (873 aa).

3 disordered regions span residues 1-24 (MDRA…GAAA), 174-230 (EHKM…PGLS), and 251-281 (LHSF…PSRK). The interval 1–170 (MDRAALRAAA…ALTCLRKVTG (170 aa)) is mediates association with membranes. The span at 206 to 216 (ASTQGPRSISV) shows a compositional bias: polar residues. Phosphothreonine is present on residues Thr256 and Thr260. Ser297 bears the Phosphoserine; by MARK3 mark. Ser320 carries the post-translational modification Phosphoserine. The segment at 333 to 377 (THRFSTKSWLSQVCNVCQKSMIFGVKCKHCRLKCHNKCTKEAPAC) adopts a Phorbol-ester/DAG-type zinc-finger fold. His334 contributes to the Zn(2+) binding site. Phosphoserine is present on Ser337. 7 residues coordinate Zn(2+): Cys346, Cys349, Cys359, Cys362, His367, Cys370, and Cys377. Residue Ser392 is modified to Phosphoserine; by MARK3. Thr411 is modified (phosphothreonine). Disordered regions lie at residues 416–473 (LTKK…RFSF) and 506–544 (HEAE…PISR). Positions 429 to 458 (SSSNPSSTTSSTPSSPAPFLTSSNPSSATT) are enriched in low complexity. The segment covering 506-519 (HEAEAEEPEAGKSE) has biased composition (basic and acidic residues). Ser518 carries the post-translational modification Phosphoserine. Residues 520-530 (AEDDEEDEVDD) show a composition bias toward acidic residues. The region spanning 563-833 (VELGEPIGQG…MDMLERLPKL (271 aa)) is the Protein kinase domain. 569-577 (IGQGRWGRV) contacts ATP. The active-site Proton acceptor is the Asp683. The ATP site is built by Lys685 and Asp700. Residue Ser838 is modified to Phosphoserine.

Belongs to the protein kinase superfamily. TKL Ser/Thr protein kinase family. In terms of assembly, homodimer. Heterodimerizes (via N-terminus) with BRAF (via N-terminus) in a MAP2K1/MEK1 or MAP2K2/MEK2-dependent manner. Interacts with MAP2K1/MEK1 and MAP2K2/MEK2. Binding to MAP2K1/MEK1 releases the intramolecular inhibitory interaction between KSR1 N-terminus and kinase domains which is required for the subsequent RSK1 dimerization with BRAF. Identified in a complex with AKAP13, MAP2K1 and BRAF. Interacts with AKAP13 and BRAF. Interacts with RAF and MAPK/ERK, in a Ras-dependent manner. Interacts with 14-3-3 proteins including YWHAB. Interacts with HSP90AA1/HSP90, YWHAE/14-3-3 and CDC37. The binding of 14-3-3 proteins to phosphorylated KSR1 prevents the membrane localization. Interacts with MARK3/C-TAK1. Interacts with PPP2R1A and PPP2CA. Interacts with VRK2. Phosphorylated on Ser-297 and, to a higher extent, on Ser-392 by MARK3. Dephosphorylated on Ser-392 by PPP2CA. Phosphorylated KSR1 is cytoplasmic and dephosphorylated KSR1 is membrane-associated. Phosphorylated by PKA at Ser-838. Phosphorylation at Ser-838 is required for cAMP-dependent activation of MAPK1 and/or MAPK3. As to expression, expressed in brain, spleen and testis. Isoform 1 is highly expressed spleen and weakly in testis, and isoform 2 is highly expressed in brain and weakly in testis.

It is found in the cytoplasm. It localises to the membrane. Its subcellular location is the cell membrane. The protein resides in the cell projection. The protein localises to the ruffle membrane. It is found in the endoplasmic reticulum membrane. It catalyses the reaction L-seryl-[protein] + ATP = O-phospho-L-seryl-[protein] + ADP + H(+). The catalysed reaction is L-threonyl-[protein] + ATP = O-phospho-L-threonyl-[protein] + ADP + H(+). Part of a multiprotein signaling complex which promotes phosphorylation of Raf family members and activation of downstream MAP kinases. Independently of its kinase activity, acts as MAP2K1/MEK1 and MAP2K2/MEK2-dependent allosteric activator of BRAF; upon binding to MAP2K1/MEK1 or MAP2K2/MEK2, dimerizes with BRAF and promotes BRAF-mediated phosphorylation of MAP2K1/MEK1 and/or MAP2K2/MEK2. Promotes activation of MAPK1 and/or MAPK3, both in response to EGF and to cAMP. Its kinase activity is unsure. Some protein kinase activity has been detected in vitro, however the physiological relevance of this activity is unknown. The protein is Kinase suppressor of Ras 1 (Ksr1) of Mus musculus (Mouse).